The chain runs to 502 residues: Beta-glucosidase 7 (502 aa).

A signal peptide spans M1–A22. Residues Q42, H140, and N185–E186 contribute to the a beta-D-glucoside site. The Proton donor role is filled by E186. N-linked (GlcNAc...) asparagine glycosylation occurs at N208. Position 325 (Y325) interacts with a beta-D-glucoside. N359 carries N-linked (GlcNAc...) asparagine glycosylation. E392 lines the a beta-D-glucoside pocket. The Nucleophile role is filled by E392. The N-linked (GlcNAc...) asparagine glycan is linked to N425. Residues W435 and Y451 each coordinate a beta-D-glucoside. Residues N457 and N479 are each glycosylated (N-linked (GlcNAc...) asparagine).

This sequence belongs to the glycosyl hydrolase 1 family.

It carries out the reaction Hydrolysis of terminal, non-reducing beta-D-glucosyl residues with release of beta-D-glucose.. The chain is Beta-glucosidase 7 from Arabidopsis thaliana (Mouse-ear cress).